Consider the following 548-residue polypeptide: Fluconazole resistance protein 1 (548 aa).

Positions 30 to 94 (SAREDETRKP…WNGPSDPENP (65 aa)) are disordered. The span at 31–51 (AREDETRKPENTDKKECKPDY) shows a compositional bias: basic and acidic residues. Over residues 60-73 (SCSESSTDSDSSGS) the composition is skewed to low complexity. 12 consecutive transmembrane segments (helical) span residues 104–124 (LVVF…SIYT), 139–159 (VVAT…PIIF), 179–199 (FFFM…GLIV), 203–223 (ISGI…ADII), 230–250 (LVLG…PLLG), 261–281 (FIFW…AFFF), 347–367 (IAVA…VFVG), 376–396 (VGLA…LFGI), 416–436 (FLIV…LFGW), 440–460 (VHWI…FNIF), 476–496 (ASVF…FPLF), and 511–531 (VAWG…IPFI).

It belongs to the major facilitator superfamily.

It localises to the membrane. In terms of biological role, probable efflux transporter. Confers resistance to the azole derivative fluconazole (FCZ). The sequence is that of Fluconazole resistance protein 1 (FLR1) from Saccharomyces cerevisiae (strain ATCC 204508 / S288c) (Baker's yeast).